Reading from the N-terminus, the 261-residue chain is ATP synthase subunit a (261 aa).

Helical transmembrane passes span 30-50 (VLFT…GLFM), 63-83 (WQVA…ANIG), 96-116 (LFMF…VLGL), 125-145 (IAIT…VGFW), 151-171 (FFSL…IAPI), 187-207 (LFVA…FVIN), 214-234 (LWLG…ISAL), and 235-255 (ELLV…LYIN).

This sequence belongs to the ATPase A chain family. As to quaternary structure, F-type ATPases have 2 components, CF(1) - the catalytic core - and CF(0) - the membrane proton channel. CF(1) has five subunits: alpha(3), beta(3), gamma(1), delta(1), epsilon(1). CF(0) has three main subunits: a(1), b(2) and c(9-12). The alpha and beta chains form an alternating ring which encloses part of the gamma chain. CF(1) is attached to CF(0) by a central stalk formed by the gamma and epsilon chains, while a peripheral stalk is formed by the delta and b chains.

It localises to the cell inner membrane. In terms of biological role, key component of the proton channel; it plays a direct role in the translocation of protons across the membrane. The polypeptide is ATP synthase subunit a (Sphingopyxis alaskensis (strain DSM 13593 / LMG 18877 / RB2256) (Sphingomonas alaskensis)).